The sequence spans 1553 residues: Pre-mRNA cleavage complex 2 protein Pcf11 (1553 aa).

Residue Ser-2 is modified to N-acetylserine. The 129-residue stretch at 14–142 (AREDACRDYQ…ALDVRVNSLD (129 aa)) folds into the CID domain. Ser-120 is subject to Phosphoserine. Thr-121 bears the Phosphothreonine mark. Positions 167 to 186 (NKSPDEPSTPGTVVSSPSIS) are disordered. Phosphoserine occurs at positions 169 and 182. Residues 174-186 (STPGTVVSSPSIS) are compositionally biased toward low complexity. Residues 208 to 235 (LLAKQKQLLELQQKKLELELEQAKAQLA) are a coiled coil. Residues 265 to 648 (AVKTPHQVPV…KQQHRLSVDA (384 aa)) form a disordered region. A Glycyl lysine isopeptide (Lys-Gly) (interchain with G-Cter in SUMO2) cross-link involves residue Lys-291. Basic and acidic residues predominate over residues 308–318 (HGKEQSHRKEF). The segment covering 321-342 (NTINQSDIKTSKNVPSEKLNSS) has biased composition (polar residues). Lys-329 is covalently cross-linked (Glycyl lysine isopeptide (Lys-Gly) (interchain with G-Cter in SUMO2)). 3 stretches are compositionally biased toward basic and acidic residues: residues 343-365 (KQEK…DSKS), 381-422 (HTKD…DVKE), and 428-443 (EKKE…EHRV). Residue Lys-457 forms a Glycyl lysine isopeptide (Lys-Gly) (interchain with G-Cter in SUMO2) linkage. The segment covering 476 to 487 (STRKRSRSRSPK) has biased composition (basic residues). 4 positions are modified to phosphoserine: Ser-490, Ser-495, Ser-510, and Ser-512. Residues 495–509 (SPKRRDRRSPKRRQR) are compositionally biased toward basic residues. Composition is skewed to basic and acidic residues over residues 530 to 568 (SHME…DRPQ) and 600 to 616 (SGWE…EHSK). Ser-645 carries the post-translational modification Phosphoserine. Lys-654 participates in a covalent cross-link: Glycyl lysine isopeptide (Lys-Gly) (interchain with G-Cter in SUMO2). The residue at position 705 (Ser-705) is a Phosphoserine. The disordered stretch occupies residues 707–733 (FNDRFPLKRPRYEDSDKPFVDGPASRF). Positions 716-725 (PRYEDSDKPF) are enriched in basic and acidic residues. Residue Lys-723 forms a Glycyl lysine isopeptide (Lys-Gly) (interchain with G-Cter in SUMO2) linkage. Ser-777 bears the Phosphoserine mark. Thr-785 carries the phosphothreonine modification. The residue at position 794 (Ser-794) is a Phosphoserine. Asymmetric dimethylarginine occurs at positions 805, 820, and 833. At Ser-851 the chain carries Phosphoserine. Positions 921–940 (HGPSGAAIRFDGPHGQPGGG) are disordered. Arg-929, Arg-944, Arg-957, Arg-982, Arg-995, Arg-1008, Arg-1092, and Arg-1103 each carry asymmetric dimethylarginine. A Glycyl lysine isopeptide (Lys-Gly) (interchain with G-Cter in SUMO2) cross-link involves residue Lys-1276. Residues 1286-1313 (DSATAQVTEAVAQPPPEEDEDQNEDQDV) form a disordered region. Residues 1301 to 1313 (PEEDEDQNEDQDV) are compositionally biased toward acidic residues. Glycyl lysine isopeptide (Lys-Gly) (interchain with G-Cter in SUMO2) cross-links involve residues Lys-1417, Lys-1509, Lys-1522, and Lys-1544. A disordered region spans residues 1516–1553 (CESPKVKEEQIDAPPACSEESVATPTEIKTESDTVESV).

In terms of assembly, associates with the phosphorylated CTD domain of POLR2A /RNA polymerase II. In terms of processing, phosphorylation at Ser-120 and/or Thr-121 by WNK1 weakens its association with POLR2A/RNA polymerase II, promoting transcript release from the chromatin template and mRNA export to the cytoplasm.

It is found in the nucleus. Functionally, component of pre-mRNA cleavage complex II, which promotes transcription termination by RNA polymerase II. This chain is Pre-mRNA cleavage complex 2 protein Pcf11, found in Mus musculus (Mouse).